A 146-amino-acid polypeptide reads, in one-letter code: MAALRLLLGIDYGTKQIGVAVGQAITGQARELCTLKAQNGVPDWDKVQALINEWKPDAIVVGLPLNMDGTPSDMSARAEKFSRKLNGRFGVTVYTHDERLTTFEAKGERMARGGQKGSYRDNPVDAIAAALLLQGWLDEHPELLNV.

The protein belongs to the YqgF nuclease family.

The protein localises to the cytoplasm. Could be a nuclease involved in processing of the 5'-end of pre-16S rRNA. The protein is Putative pre-16S rRNA nuclease of Pseudomonas syringae pv. syringae (strain B728a).